The chain runs to 37 residues: Cytochrome b6-f complex subunit 5 (37 aa).

Residues 5-25 (LLSGIVLGLVPVTIAGLFVTA) form a helical membrane-spanning segment.

Belongs to the PetG family. As to quaternary structure, the 4 large subunits of the cytochrome b6-f complex are cytochrome b6, subunit IV (17 kDa polypeptide, PetD), cytochrome f and the Rieske protein, while the 4 small subunits are PetG, PetL, PetM and PetN. The complex functions as a dimer.

The protein localises to the plastid. Its subcellular location is the chloroplast thylakoid membrane. In terms of biological role, component of the cytochrome b6-f complex, which mediates electron transfer between photosystem II (PSII) and photosystem I (PSI), cyclic electron flow around PSI, and state transitions. PetG is required for either the stability or assembly of the cytochrome b6-f complex. The protein is Cytochrome b6-f complex subunit 5 of Chlorella vulgaris (Green alga).